The following is a 251-amino-acid chain: 5'-nucleotidase SurE (251 aa).

A divalent metal cation contacts are provided by D8, D9, S40, and N95.

This sequence belongs to the SurE nucleotidase family. It depends on a divalent metal cation as a cofactor.

The protein localises to the cytoplasm. The catalysed reaction is a ribonucleoside 5'-phosphate + H2O = a ribonucleoside + phosphate. Its function is as follows. Nucleotidase that shows phosphatase activity on nucleoside 5'-monophosphates. The protein is 5'-nucleotidase SurE of Lawsonia intracellularis (strain PHE/MN1-00).